A 518-amino-acid chain; its full sequence is Sensor protein kinase HptS (518 aa).

The next 2 membrane-spanning stretches (helical) occupy residues 20-40 (IFPV…IYIW) and 222-242 (GITL…FGFI). A Histidine kinase domain is found at 297-513 (EQLIHSIEHT…LICYKIPLSR (217 aa)). At histidine 325 the chain carries Phosphohistidine; by autocatalysis.

Post-translationally, autophosphorylated.

The protein resides in the cell membrane. It carries out the reaction ATP + protein L-histidine = ADP + protein N-phospho-L-histidine.. Its function is as follows. Member of the two-component regulatory system HptS/HptR that regulates genes involved in hexose phosphate transport system in response to changes in extracellular phosphate sources. May act as a sensor protein kinase which is autophosphorylated at a histidine residue and transfers its phosphate group to the conserved aspartic acid residue in the regulatory domain of HptS. In turn, HptS antagonizes CcpA-dependent transcription of a subset of CcpA-regulated genes involved in antibiotic susceptibility. The polypeptide is Sensor protein kinase HptS (hptS) (Staphylococcus aureus (strain USA300)).